The following is a 251-amino-acid chain: Glucosamine-6-phosphate deaminase (251 aa).

The active-site Proton acceptor; for enolization step is the aspartate 67. Residue asparagine 136 is the For ring-opening step of the active site. The active-site Proton acceptor; for ring-opening step is the histidine 138. Glutamate 143 functions as the For ring-opening step in the catalytic mechanism.

Belongs to the glucosamine/galactosamine-6-phosphate isomerase family. NagB subfamily.

It catalyses the reaction alpha-D-glucosamine 6-phosphate + H2O = beta-D-fructose 6-phosphate + NH4(+). It participates in amino-sugar metabolism; N-acetylneuraminate degradation; D-fructose 6-phosphate from N-acetylneuraminate: step 5/5. In terms of biological role, catalyzes the reversible isomerization-deamination of glucosamine 6-phosphate (GlcN6P) to form fructose 6-phosphate (Fru6P) and ammonium ion. This Geobacillus sp. (strain WCH70) protein is Glucosamine-6-phosphate deaminase.